Reading from the N-terminus, the 234-residue chain is Ubiquitin domain-containing protein 2 (234 aa).

The disordered stretch occupies residues 1–46 (MGGCVGAQHDSSGSLNENSEGTGVALGRNQPLKKEKPKWKSDYPMT). The span at 9–21 (HDSSGSLNENSEG) shows a compositional bias: polar residues. Residues 32 to 41 (LKKEKPKWKS) show a composition bias toward basic and acidic residues. The Ubiquitin-like domain maps to 152-227 (SQLRLRLSTG…VQVIMSQPLQ (76 aa)).

The protein resides in the cytoplasm. This Bos taurus (Bovine) protein is Ubiquitin domain-containing protein 2 (UBTD2).